The primary structure comprises 674 residues: Carbon monoxide dehydrogenase/acetyl-CoA synthase subunit beta (674 aa).

Residues 1–25 form a disordered region; it reads MPRFRDLSHNCRPSEAPRVMEPKNR. [4Fe-4S] cluster contacts are provided by C59, C67, C68, C71, C76, and C90. [Ni-4Fe-4S] cluster contacts are provided by H283, C317, C355, C470, C500, and C550.

As to quaternary structure, tetramer of two alpha and two beta chains. [Ni-Fe-S] cluster serves as cofactor. The cofactor is [4Fe-4S] cluster.

It carries out the reaction CO + 2 oxidized [2Fe-2S]-[ferredoxin] + H2O = 2 reduced [2Fe-2S]-[ferredoxin] + CO2 + 2 H(+). Its function is as follows. The beta subunit (this protein) generates CO from CO(2), while the alpha subunit combines the CO with CoA and a methyl group to form acetyl-CoA. The methyl group, which is incorporated into acetyl-CoA, is transferred to the alpha subunit by a corrinoid iron-sulfur protein. The sequence is that of Carbon monoxide dehydrogenase/acetyl-CoA synthase subunit beta from Moorella thermoacetica (Clostridium thermoaceticum).